The primary structure comprises 101 residues: Small ribosomal subunit protein uS10 (101 aa).

This sequence belongs to the universal ribosomal protein uS10 family. In terms of assembly, part of the 30S ribosomal subunit.

Involved in the binding of tRNA to the ribosomes. This Mycobacterium ulcerans (strain Agy99) protein is Small ribosomal subunit protein uS10.